Consider the following 688-residue polypeptide: Glycine--tRNA ligase beta subunit (688 aa).

It belongs to the class-II aminoacyl-tRNA synthetase family. As to quaternary structure, tetramer of two alpha and two beta subunits.

The protein resides in the cytoplasm. It carries out the reaction tRNA(Gly) + glycine + ATP = glycyl-tRNA(Gly) + AMP + diphosphate. The chain is Glycine--tRNA ligase beta subunit from Shewanella sp. (strain MR-7).